The chain runs to 396 residues: Tryptophan synthase beta chain (396 aa).

Lys86 carries the post-translational modification N6-(pyridoxal phosphate)lysine.

The protein belongs to the TrpB family. As to quaternary structure, tetramer of two alpha and two beta chains. It depends on pyridoxal 5'-phosphate as a cofactor.

The catalysed reaction is (1S,2R)-1-C-(indol-3-yl)glycerol 3-phosphate + L-serine = D-glyceraldehyde 3-phosphate + L-tryptophan + H2O. It functions in the pathway amino-acid biosynthesis; L-tryptophan biosynthesis; L-tryptophan from chorismate: step 5/5. The beta subunit is responsible for the synthesis of L-tryptophan from indole and L-serine. In Francisella tularensis subsp. holarctica (strain FTNF002-00 / FTA), this protein is Tryptophan synthase beta chain.